Reading from the N-terminus, the 295-residue chain is MNIQEMILTLQKHWSNEGCVLLQSYDVEKGAGTMSPYTFLRSLGPEPWKVAYVEPSRRPADGRYGDNPNRLYQHHQFQVIIKPSPDNIQELYLDSLKALGIDPLEHDIRFVEDNWENPSLGCAGLGWEVWLDGMEITQFTYFQQVGGLECKPVSVEITYGIERLASYIQDKENVFDLEWTNGYTIKDLFKMAEYEHSVYTFETSDVDMLFELFATYEKEANRQMDQGLVHPAYDYVLKCSHTFNLLDAKGAISVTERTGYIARVRNLARKVAKTYYDEREKLGFPMLKEEEASHE.

Belongs to the class-II aminoacyl-tRNA synthetase family. Tetramer of two alpha and two beta subunits.

The protein resides in the cytoplasm. The catalysed reaction is tRNA(Gly) + glycine + ATP = glycyl-tRNA(Gly) + AMP + diphosphate. This chain is Glycine--tRNA ligase alpha subunit, found in Bacillus licheniformis (strain ATCC 14580 / DSM 13 / JCM 2505 / CCUG 7422 / NBRC 12200 / NCIMB 9375 / NCTC 10341 / NRRL NRS-1264 / Gibson 46).